The following is a 193-amino-acid chain: Probable GTP-binding protein EngB (193 aa).

Positions glycine 22–alanine 193 constitute an EngB-type G domain. Residues glycine 30 to serine 37, glycine 57 to glycine 61, aspartate 75 to glycine 78, threonine 142 to aspartate 145, and phenylalanine 173 to serine 175 each bind GTP. Residues serine 37 and threonine 59 each contribute to the Mg(2+) site.

The protein belongs to the TRAFAC class TrmE-Era-EngA-EngB-Septin-like GTPase superfamily. EngB GTPase family. Mg(2+) serves as cofactor.

Its function is as follows. Necessary for normal cell division and for the maintenance of normal septation. The protein is Probable GTP-binding protein EngB of Desulfotalea psychrophila (strain LSv54 / DSM 12343).